The chain runs to 224 residues: 2,5-diamino-6-ribosylamino-4(3H)-pyrimidinone 5'-phosphate reductase (224 aa).

NADP(+) is bound by residues glycine 16, threonine 57, aspartate 61, serine 83–arginine 86, valine 134, and glycine 156–leucine 159.

This sequence belongs to the HTP reductase family. Homodimer.

The enzyme catalyses 2,5-diamino-6-(1-D-ribitylamino)pyrimidin-4(3H)-one 5'-phosphate + NADP(+) = 2,5-diamino-6-(1-D-ribosylamino)pyrimidin-4(3H)-one 5'-phosphate + NADPH + H(+). It catalyses the reaction 2,5-diamino-6-(1-D-ribitylamino)pyrimidin-4(3H)-one 5'-phosphate + NAD(+) = 2,5-diamino-6-(1-D-ribosylamino)pyrimidin-4(3H)-one 5'-phosphate + NADH + H(+). The protein operates within cofactor biosynthesis; riboflavin biosynthesis. Catalyzes an early step in riboflavin biosynthesis, the NAD(P)H-dependent reduction of the ribose side chain of 2,5-diamino-6-ribosylamino-4(3H)-pyrimidinone 5'-phosphate, yielding 2,5-diamino-6-ribitylamino-4(3H)-pyrimidinone 5'-phosphate. The beta anomer is the authentic substrate, and the alpha anomer can serve as substrate subsequent to spontaneous anomerization. NADPH and NADH function equally well as the reductants. Does not catalyze the reduction of 5-amino-6-(5-phospho-D-ribosylamino)uracil to 5-amino-6-(5-phospho-D-ribitylamino)uracil. This chain is 2,5-diamino-6-ribosylamino-4(3H)-pyrimidinone 5'-phosphate reductase (arfC), found in Methanocaldococcus jannaschii (strain ATCC 43067 / DSM 2661 / JAL-1 / JCM 10045 / NBRC 100440) (Methanococcus jannaschii).